The following is a 318-amino-acid chain: Protein phosphatase 1 regulatory subunit 3C (318 aa).

The PP1-binding motif motif lies at 84 to 87 (RVVF). Positions 141-263 (PSADYLSFRN…YRIVHVQWKP (123 aa)) are interaction with EPM2A. Residues 149-257 (RNHFQKNSVC…NNEGQNYRIV (109 aa)) form the CBM21 domain.

As to quaternary structure, interacts with PPP1CC catalytic subunit of PP1 and associates with glycogen. Forms complexes with glycogen phosphorylase, glycogen synthase and phosphorylase kinase which is necessary for its regulation of PP1 activity. Also interacts with EPM2A/laforin. Ubiquitinated by NHLRC1/malin in a EPM2A/laforin-dependent manner.

Functionally, acts as a glycogen-targeting subunit for PP1 and regulates its activity. Activates glycogen synthase, reduces glycogen phosphorylase activity and limits glycogen breakdown. Dramatically increases basal and insulin-stimulated glycogen synthesis upon overexpression in a variety of cell types. This Bos taurus (Bovine) protein is Protein phosphatase 1 regulatory subunit 3C.